The sequence spans 89 residues: Small ribosomal subunit protein uS15 (89 aa).

Belongs to the universal ribosomal protein uS15 family. Part of the 30S ribosomal subunit. Forms a bridge to the 50S subunit in the 70S ribosome, contacting the 23S rRNA.

One of the primary rRNA binding proteins, it binds directly to 16S rRNA where it helps nucleate assembly of the platform of the 30S subunit by binding and bridging several RNA helices of the 16S rRNA. Functionally, forms an intersubunit bridge (bridge B4) with the 23S rRNA of the 50S subunit in the ribosome. This chain is Small ribosomal subunit protein uS15, found in Streptococcus uberis (strain ATCC BAA-854 / 0140J).